The sequence spans 690 residues: Protein O-mannosyl-transferase F38B6.6 (690 aa).

The interval 1–24 is disordered; the sequence is MKKHLHHKVSGSCDPGDRSPKEKG. The Cytoplasmic portion of the chain corresponds to 1 to 32; that stretch reads MKKHLHHKVSGSCDPGDRSPKEKGRSQGIRNL. The span at 15–24 shows a compositional bias: basic and acidic residues; that stretch reads PGDRSPKEKG. A helical membrane pass occupies residues 33 to 53; that stretch reads LILISLSIIPYLSCLGGDFVF. The Extracellular segment spans residues 54–110; it reads DDAESIVNNPIVNGKDPLLQIFSRDFWGRSISSSNSHKSYRPVTTFTFWLNYKLHET. The helical transmembrane segment at 111–131 threads the bilayer; that stretch reads STLGYHVVNIICHTVATLVFY. At 132–138 the chain is on the cytoplasmic side; sequence KLGKQLE. The helical transmembrane segment at 139 to 159 threads the bilayer; sequence HIFDFFNIAFSASILFAVHPV. Topologically, residues 160-166 are extracellular; the sequence is HTEAVAN. A glycan (N-linked (GlcNAc...) asparagine) is linked at Asn166. A helical membrane pass occupies residues 167–187; sequence ITGRAELLMTIFSLAALILHV. Over 188–234 the chain is Cytoplasmic; that stretch reads KNREINCKFVLLVILSTLSKEQGLMTIPIAICIDFLAHRSCRSNFVR. The helical transmembrane segment at 235–255 threads the bilayer; it reads MICLLVAIGFLRMMVNGFEAA. Over 256–273 the chain is Extracellular; sequence KFTKLDNPTAFLNSKFYR. Residues 274–294 traverse the membrane as a helical segment; it reads MINYTYIWLYHAYLLVIPVNL. Residues 295-307 are Cytoplasmic-facing; the sequence is CFDYSMGCISSIT. A helical transmembrane segment spans residues 308 to 328; that stretch reads TMWDLRALSPVLIFTIVIIGV. The Extracellular portion of the chain corresponds to 329–341; it reads KFQNECRAFTLSS. The chain crosses the membrane as a helical span at residues 342–362; sequence LMGIISFLPASNIFFTVGFSI. The Cytoplasmic portion of the chain corresponds to 363–365; it reads AER. The chain crosses the membrane as a helical span at residues 366–386; that stretch reads VLYLPSAGFCLLCAIIFKKLS. Residues 387–690 lie on the Extracellular side of the membrane; the sequence is VHFKNADVLS…EHNCYNSTLP (304 aa). TPR repeat units follow at residues 398–431, 432–465, 466–499, 500–533, and 534–567; these read TLIL…CPTN, AKIH…DPSY, EQAL…RPSF, AVAW…RPNS, and AHCL…DPSH. N-linked (GlcNAc...) asparagine glycans are attached at residues Asn559, Asn600, and Asn617. TPR repeat units lie at residues 602–635 and 636–669; these read SRVH…NPTS and VLFH…DSKN. An N-linked (GlcNAc...) asparagine glycan is attached at Asn686.

It belongs to the TMTC family.

The protein resides in the membrane. It is found in the endoplasmic reticulum. The enzyme catalyses a di-trans,poly-cis-dolichyl beta-D-mannosyl phosphate + L-seryl-[protein] = 3-O-(alpha-D-mannosyl)-L-seryl-[protein] + a di-trans,poly-cis-dolichyl phosphate + H(+). It carries out the reaction a di-trans,poly-cis-dolichyl beta-D-mannosyl phosphate + L-threonyl-[protein] = 3-O-(alpha-D-mannosyl)-L-threonyl-[protein] + a di-trans,poly-cis-dolichyl phosphate + H(+). Its pathway is protein modification; protein glycosylation. In terms of biological role, transfers mannosyl residues to the hydroxyl group of serine or threonine residues. This chain is Protein O-mannosyl-transferase F38B6.6, found in Caenorhabditis elegans.